The chain runs to 213 residues: Urease accessory protein UreE (213 aa).

The segment at 170-213 (EHHGHSHSHSHSHSHDHDHDHDHDHDHDHQHGPSCSHGHHHGHR) is disordered. Over residues 182–200 (HSHDHDHDHDHDHDHDHQH) the composition is skewed to basic and acidic residues.

This sequence belongs to the UreE family.

The protein localises to the cytoplasm. Its function is as follows. Involved in urease metallocenter assembly. Binds nickel. Probably functions as a nickel donor during metallocenter assembly. The chain is Urease accessory protein UreE from Burkholderia mallei (strain NCTC 10229).